The following is a 249-amino-acid chain: ATP synthase subunit a, chloroplastic (249 aa).

Helical transmembrane passes span 40-60 (QVLI…IVAV), 97-117 (VPFI…GALL), 136-156 (INTT…AGLS), 201-221 (LVVV…VMFL), and 222-242 (GLFT…AYIG).

The protein belongs to the ATPase A chain family. F-type ATPases have 2 components, CF(1) - the catalytic core - and CF(0) - the membrane proton channel. CF(1) has five subunits: alpha(3), beta(3), gamma(1), delta(1), epsilon(1). CF(0) has four main subunits: a, b, b' and c.

The protein resides in the plastid. The protein localises to the chloroplast thylakoid membrane. Functionally, key component of the proton channel; it plays a direct role in the translocation of protons across the membrane. In Manihot esculenta (Cassava), this protein is ATP synthase subunit a, chloroplastic.